A 193-amino-acid chain; its full sequence is Probable GTP-binding protein EngB (193 aa).

One can recognise an EngB-type G domain in the interval 19–188; sequence SVKEVCFMGR…HKQIFELFKA (170 aa). GTP contacts are provided by residues 27 to 34, 53 to 57, 70 to 73, 136 to 139, and 167 to 169; these read GRSNVGKS, GRTQL, DLPG, NKFD, and VSA. 2 residues coordinate Mg(2+): S34 and T55.

Belongs to the TRAFAC class TrmE-Era-EngA-EngB-Septin-like GTPase superfamily. EngB GTPase family. Mg(2+) is required as a cofactor.

Necessary for normal cell division and for the maintenance of normal septation. The polypeptide is Probable GTP-binding protein EngB (Mycoplasma pneumoniae (strain ATCC 29342 / M129 / Subtype 1) (Mycoplasmoides pneumoniae)).